Consider the following 211-residue polypeptide: Ribonuclease T (211 aa).

The 175-residue stretch at 24-198 (VVVDVETGGF…YDAEKTAHLF (175 aa)) folds into the Exonuclease domain. Residues aspartate 27, glutamate 29, histidine 185, and aspartate 190 each contribute to the Mg(2+) site. Histidine 185 functions as the Proton donor/acceptor in the catalytic mechanism.

The protein belongs to the RNase T family. In terms of assembly, homodimer. It depends on Mg(2+) as a cofactor.

Functionally, trims short 3' overhangs of a variety of RNA species, leaving a one or two nucleotide 3' overhang. Responsible for the end-turnover of tRNA: specifically removes the terminal AMP residue from uncharged tRNA (tRNA-C-C-A). Also appears to be involved in tRNA biosynthesis. This Xylella fastidiosa (strain 9a5c) protein is Ribonuclease T.